The following is a 463-amino-acid chain: Chromosomal replication initiator protein DnaA (463 aa).

Residues 1 to 84 (MNTNQIILTN…QLFQHYNNAI (84 aa)) are domain I, interacts with DnaA modulators. Positions 84–124 (IKTVEIITKELPASNQATLELPTKTFADIGSSELNSENIFS) are domain II. The domain III, AAA+ region stretch occupies residues 125-343 (TFDIRFTFDN…GALNKVIAHS (219 aa)). 4 residues coordinate ATP: glycine 171, glycine 173, lysine 174, and threonine 175. A domain IV, binds dsDNA region spans residues 344-463 (NFTAKEITLE…INLMMKILQN (120 aa)).

Belongs to the DnaA family. Oligomerizes as a right-handed, spiral filament on DNA at oriC.

It is found in the cytoplasm. Functionally, plays an essential role in the initiation and regulation of chromosomal replication. ATP-DnaA binds to the origin of replication (oriC) to initiate formation of the DNA replication initiation complex once per cell cycle. Binds the DnaA box (a 9 base pair repeat at the origin) and separates the double-stranded (ds)DNA. Forms a right-handed helical filament on oriC DNA; dsDNA binds to the exterior of the filament while single-stranded (ss)DNA is stabiized in the filament's interior. The ATP-DnaA-oriC complex binds and stabilizes one strand of the AT-rich DNA unwinding element (DUE), permitting loading of DNA polymerase. After initiation quickly degrades to an ADP-DnaA complex that is not apt for DNA replication. Binds acidic phospholipids. In Rickettsia bellii (strain RML369-C), this protein is Chromosomal replication initiator protein DnaA.